Consider the following 95-residue polypeptide: Large ribosomal subunit protein bL27 (95 aa).

Positions 1-10 are excised as a propeptide; that stretch reads MLLTMNLQLF. The interval 12–38 is disordered; it reads HKKGGGSTSNGRDSESKRLGAKSADGQ.

It belongs to the bacterial ribosomal protein bL27 family. The N-terminus is cleaved by ribosomal processing cysteine protease Prp.

The chain is Large ribosomal subunit protein bL27 from Enterococcus faecalis (strain ATCC 700802 / V583).